The following is a 144-amino-acid chain: Large ribosomal subunit protein uL11 (144 aa).

Belongs to the universal ribosomal protein uL11 family. In terms of assembly, part of the ribosomal stalk of the 50S ribosomal subunit. Interacts with L10 and the large rRNA to form the base of the stalk. L10 forms an elongated spine to which L12 dimers bind in a sequential fashion forming a multimeric L10(L12)X complex. Post-translationally, one or more lysine residues are methylated.

Forms part of the ribosomal stalk which helps the ribosome interact with GTP-bound translation factors. The polypeptide is Large ribosomal subunit protein uL11 (Streptomyces avermitilis (strain ATCC 31267 / DSM 46492 / JCM 5070 / NBRC 14893 / NCIMB 12804 / NRRL 8165 / MA-4680)).